The primary structure comprises 215 residues: Thiamine-phosphate synthase 1 (215 aa).

Residues 35–39 and N67 each bind 4-amino-2-methyl-5-(diphosphooxymethyl)pyrimidine; that span reads QYRFE. Residues D68 and D87 each contribute to the Mg(2+) site. A 4-amino-2-methyl-5-(diphosphooxymethyl)pyrimidine-binding site is contributed by T106. 132-134 contributes to the 2-[(2R,5Z)-2-carboxy-4-methylthiazol-5(2H)-ylidene]ethyl phosphate binding site; it reads TST. 4-amino-2-methyl-5-(diphosphooxymethyl)pyrimidine is bound at residue K135. G162 contacts 2-[(2R,5Z)-2-carboxy-4-methylthiazol-5(2H)-ylidene]ethyl phosphate.

Belongs to the thiamine-phosphate synthase family. It depends on Mg(2+) as a cofactor.

It carries out the reaction 2-[(2R,5Z)-2-carboxy-4-methylthiazol-5(2H)-ylidene]ethyl phosphate + 4-amino-2-methyl-5-(diphosphooxymethyl)pyrimidine + 2 H(+) = thiamine phosphate + CO2 + diphosphate. The catalysed reaction is 2-(2-carboxy-4-methylthiazol-5-yl)ethyl phosphate + 4-amino-2-methyl-5-(diphosphooxymethyl)pyrimidine + 2 H(+) = thiamine phosphate + CO2 + diphosphate. The enzyme catalyses 4-methyl-5-(2-phosphooxyethyl)-thiazole + 4-amino-2-methyl-5-(diphosphooxymethyl)pyrimidine + H(+) = thiamine phosphate + diphosphate. It participates in cofactor biosynthesis; thiamine diphosphate biosynthesis; thiamine phosphate from 4-amino-2-methyl-5-diphosphomethylpyrimidine and 4-methyl-5-(2-phosphoethyl)-thiazole: step 1/1. Functionally, condenses 4-methyl-5-(beta-hydroxyethyl)thiazole monophosphate (THZ-P) and 2-methyl-4-amino-5-hydroxymethyl pyrimidine pyrophosphate (HMP-PP) to form thiamine monophosphate (TMP). This Aquifex aeolicus (strain VF5) protein is Thiamine-phosphate synthase 1.